The chain runs to 205 residues: Methylthioribulose-1-phosphate dehydratase (205 aa).

H95 and H97 together coordinate Zn(2+).

The protein belongs to the aldolase class II family. MtnB subfamily. Zn(2+) is required as a cofactor.

It catalyses the reaction 5-(methylsulfanyl)-D-ribulose 1-phosphate = 5-methylsulfanyl-2,3-dioxopentyl phosphate + H2O. It participates in amino-acid biosynthesis; L-methionine biosynthesis via salvage pathway; L-methionine from S-methyl-5-thio-alpha-D-ribose 1-phosphate: step 2/6. Its function is as follows. Catalyzes the dehydration of methylthioribulose-1-phosphate (MTRu-1-P) into 2,3-diketo-5-methylthiopentyl-1-phosphate (DK-MTP-1-P). The polypeptide is Methylthioribulose-1-phosphate dehydratase (Microcystis aeruginosa (strain NIES-843 / IAM M-2473)).